We begin with the raw amino-acid sequence, 381 residues long: Transcriptional regulatory protein FlgR (381 aa).

The 112-residue stretch at 2–113 folds into the Response regulatory domain; that stretch reads KIAIVEDDIN…LLLESIYRTK (112 aa). Position 51 is a 4-aspartylphosphate (Asp51). Residues 136 to 365 form the Sigma-54 factor interaction domain; it reads FLAASKALEE…LLGVVERAAI (230 aa). ATP is bound by residues 164–171 and 227–236; these read GESGVGKE and ANKGTIFLDE.

Post-translationally, phosphorylated by FlgS.

In terms of biological role, member of the two-component regulatory system FlgR/FlgS that induces the transcriptional induction of the genes needed in motility and flagellar biogenesis. Upon phosphorylation by FlgS, functions as a transcriptional regulator and activates transcription of RpoN-dependent flagellar genes. This chain is Transcriptional regulatory protein FlgR (flgR), found in Helicobacter pylori (strain ATCC 700392 / 26695) (Campylobacter pylori).